The sequence spans 549 residues: Glucose-6-phosphate isomerase (549 aa).

Residues lysine 80, lysine 228, and lysine 234 each carry the N6-acetyllysine modification. The active-site Proton donor is glutamate 355. Residues histidine 386 and lysine 514 contribute to the active site.

It belongs to the GPI family.

The protein resides in the cytoplasm. It catalyses the reaction alpha-D-glucose 6-phosphate = beta-D-fructose 6-phosphate. Its pathway is carbohydrate biosynthesis; gluconeogenesis. The protein operates within carbohydrate degradation; glycolysis; D-glyceraldehyde 3-phosphate and glycerone phosphate from D-glucose: step 2/4. Catalyzes the reversible isomerization of glucose-6-phosphate to fructose-6-phosphate. This Shigella flexneri protein is Glucose-6-phosphate isomerase.